The primary structure comprises 63 residues: MLSNPSRHISRQSATDKRRLKSIKVYLGHAEVVVFNVSRRGQRISNRLSLNIAQFGQSLYLVG.

This is an uncharacterized protein from Thermoproteus tenax (TTV1).